We begin with the raw amino-acid sequence, 546 residues long: Major facilitator superfamily transporter MPN_077 (546 aa).

Helical transmembrane passes span 2–22, 62–82, 88–108, 179–199, 220–240, 248–268, 305–325, 344–364, 377–397, 401–421, 442–462, and 485–505; these read WGLV…IDFI, WTIT…VVKF, VMIM…GSPL, AFFI…IAYA, FWGF…PGVG, VWVV…FAWF, LLAI…QTWF, PILL…LSPF, FIFT…ATLG, VVGF…GWSL, IIFG…DIIT, and IAAI…IIYL.

It belongs to the major facilitator superfamily.

Its subcellular location is the cell membrane. In Mycoplasma pneumoniae (strain ATCC 29342 / M129 / Subtype 1) (Mycoplasmoides pneumoniae), this protein is Major facilitator superfamily transporter MPN_077.